The following is a 197-amino-acid chain: Recombination protein RecR (197 aa).

The C4-type zinc-finger motif lies at 55–70 (CVQCRDFTESEVCAIC). The Toprim domain occupies 78-173 (QQLCVVESPA…RPSRLAQGMP (96 aa)).

The protein belongs to the RecR family.

Functionally, may play a role in DNA repair. It seems to be involved in an RecBC-independent recombinational process of DNA repair. It may act with RecF and RecO. The sequence is that of Recombination protein RecR from Xanthomonas campestris pv. campestris (strain 8004).